An 89-amino-acid chain; its full sequence is Small ribosomal subunit protein uS17 (89 aa).

It belongs to the universal ribosomal protein uS17 family. In terms of assembly, part of the 30S ribosomal subunit.

Functionally, one of the primary rRNA binding proteins, it binds specifically to the 5'-end of 16S ribosomal RNA. In Polaromonas sp. (strain JS666 / ATCC BAA-500), this protein is Small ribosomal subunit protein uS17.